We begin with the raw amino-acid sequence, 298 residues long: Probable prolyl 4-hydroxylase 4 (298 aa).

Topologically, residues 1-6 (MARRGL) are cytoplasmic. A helical; Signal-anchor for type II membrane protein membrane pass occupies residues 7 to 25 (LISFFAIFSVLLQSSTSLI). Residues 26-298 (SSSSVFVNPS…GYCRRSCKAC (273 aa)) lie on the Lumenal side of the membrane. Asn77 is a glycosylation site (N-linked (GlcNAc...) asparagine). The Fe2OG dioxygenase domain occupies 120–245 (NGEDIQVLRY…KWSATKWIHV (126 aa)). 2 residues coordinate Fe cation: His138 and Asp140. Asn164 is a glycosylation site (N-linked (GlcNAc...) asparagine). His226 contributes to the Fe cation binding site. Residue Lys236 participates in 2-oxoglutarate binding. Asn257 and Asn262 each carry an N-linked (GlcNAc...) asparagine glycan. The ShKT domain occupies 258–298 (CTDMNESCERWAVLGECTKNPEYMVGTTELPGYCRRSCKAC). 3 disulfide bridges follow: Cys258–Cys298, Cys265–Cys291, and Cys274–Cys295.

Belongs to the P4HA family. Fe(2+) is required as a cofactor. It depends on L-ascorbate as a cofactor.

The protein localises to the endoplasmic reticulum membrane. It catalyses the reaction L-prolyl-[collagen] + 2-oxoglutarate + O2 = trans-4-hydroxy-L-prolyl-[collagen] + succinate + CO2. In terms of biological role, catalyzes the post-translational formation of 4-hydroxyproline in -Xaa-Pro-Gly- sequences in proline-rich peptide sequences of plant glycoproteins and other proteins. Hydroxyprolines are important constituent of many plant cell wall glycoproteins such as extensins, hydroxyproline-rich glycoproteins, lectins and arabinogalactan proteins. In Arabidopsis thaliana (Mouse-ear cress), this protein is Probable prolyl 4-hydroxylase 4.